The primary structure comprises 500 residues: L-arabinose isomerase (500 aa).

Positions 306, 333, 350, and 450 each coordinate Mn(2+).

It belongs to the arabinose isomerase family. Homohexamer. The cofactor is Mn(2+).

The enzyme catalyses beta-L-arabinopyranose = L-ribulose. The protein operates within carbohydrate degradation; L-arabinose degradation via L-ribulose; D-xylulose 5-phosphate from L-arabinose (bacterial route): step 1/3. In terms of biological role, catalyzes the conversion of L-arabinose to L-ribulose. The chain is L-arabinose isomerase from Escherichia coli O6:H1 (strain CFT073 / ATCC 700928 / UPEC).